The primary structure comprises 249 residues: 3-deoxy-manno-octulosonate cytidylyltransferase (249 aa).

It belongs to the KdsB family.

The protein resides in the cytoplasm. The enzyme catalyses 3-deoxy-alpha-D-manno-oct-2-ulosonate + CTP = CMP-3-deoxy-beta-D-manno-octulosonate + diphosphate. It participates in nucleotide-sugar biosynthesis; CMP-3-deoxy-D-manno-octulosonate biosynthesis; CMP-3-deoxy-D-manno-octulosonate from 3-deoxy-D-manno-octulosonate and CTP: step 1/1. The protein operates within bacterial outer membrane biogenesis; lipopolysaccharide biosynthesis. In terms of biological role, activates KDO (a required 8-carbon sugar) for incorporation into bacterial lipopolysaccharide in Gram-negative bacteria. This Photorhabdus laumondii subsp. laumondii (strain DSM 15139 / CIP 105565 / TT01) (Photorhabdus luminescens subsp. laumondii) protein is 3-deoxy-manno-octulosonate cytidylyltransferase.